Here is a 143-residue protein sequence, read N- to C-terminus: Flagellar assembly factor FliW (143 aa).

This sequence belongs to the FliW family. In terms of assembly, interacts with translational regulator CsrA and flagellin(s).

Its subcellular location is the cytoplasm. Functionally, acts as an anti-CsrA protein, binds CsrA and prevents it from repressing translation of its target genes, one of which is flagellin. Binds to flagellin and participates in the assembly of the flagellum. The polypeptide is Flagellar assembly factor FliW (Bacillus velezensis (strain DSM 23117 / BGSC 10A6 / LMG 26770 / FZB42) (Bacillus amyloliquefaciens subsp. plantarum)).